The sequence spans 158 residues: Cyclic pyranopterin monophosphate synthase (158 aa).

Substrate-binding positions include 76-78 (LCH) and 114-115 (ME). Residue Asp129 is part of the active site.

Belongs to the MoaC family. In terms of assembly, homohexamer; trimer of dimers.

It catalyses the reaction (8S)-3',8-cyclo-7,8-dihydroguanosine 5'-triphosphate = cyclic pyranopterin phosphate + diphosphate. It functions in the pathway cofactor biosynthesis; molybdopterin biosynthesis. Functionally, catalyzes the conversion of (8S)-3',8-cyclo-7,8-dihydroguanosine 5'-triphosphate to cyclic pyranopterin monophosphate (cPMP). In Shewanella piezotolerans (strain WP3 / JCM 13877), this protein is Cyclic pyranopterin monophosphate synthase.